A 97-amino-acid chain; its full sequence is YcgL domain-containing protein Maqu_1609 (97 aa).

Residues 5–89 enclose the YcgL domain; it reads EFVSVFRSSK…EQDTYIVDFK (85 aa).

In Marinobacter nauticus (strain ATCC 700491 / DSM 11845 / VT8) (Marinobacter aquaeolei), this protein is YcgL domain-containing protein Maqu_1609.